Reading from the N-terminus, the 532-residue chain is Protein DETOXIFICATION 51 (532 aa).

12 consecutive transmembrane segments (helical) span residues 65–85 (FPIA…MFFL), 98–118 (LAIA…ALGM), 142–162 (VVFL…VGKI), 176–196 (AQTY…LHPI), 208–228 (PVTL…LFLV), 238–258 (VAVA…CYVW), 290–310 (VSVC…GLLV), 316–336 (VAAM…PSSL), 358–378 (LTAT…AAFA), 395–415 (ILQL…GNCP), 439–459 (AFYL…GIGF), and 461–481 (GLWV…MYVV).

This sequence belongs to the multi antimicrobial extrusion (MATE) (TC 2.A.66.1) family. Expressed in the meristematic regions. Mainly detected in tissues where cells were actively dividing, such as leaf primordia and young leaves, the junction between lateral root and the primary root, root cap, hydathodes, the junction between secondary inflorescence and the main inflorescence, young stamen and young siliques. Highly expressed at the junction between the hypocotyl and the root, and at the marginal areas of cotyledons and true leaves, coinciding with the locations of the hydathode. Also highly expressed at the basal regions of the newly emerged lateral roots. In the floral organs, mostly expressed at the style of the pistil.

It is found in the endosome membrane. Its subcellular location is the late endosome membrane. Functions as a multidrug and toxin extrusion transporter that negatively regulates plant disease resistance. Plays an important role in maintaining normal plant architecture, possibly by regulating local auxin biosynthesis. May act as a negative regulator of hypocotyl cell elongation in the light. The chain is Protein DETOXIFICATION 51 from Arabidopsis thaliana (Mouse-ear cress).